Consider the following 298-residue polypeptide: Proline-rich protein 32 (298 aa).

Residues 36–56 (CLSSKPEDDAEPWGQPQVPLR) are disordered.

This Homo sapiens (Human) protein is Proline-rich protein 32 (PRR32).